A 302-amino-acid polypeptide reads, in one-letter code: Homoserine O-acetyltransferase (302 aa).

Cysteine 142 functions as the Acyl-thioester intermediate in the catalytic mechanism. Lysine 163 and serine 192 together coordinate substrate. The Proton acceptor role is filled by histidine 235. Residue glutamate 237 is part of the active site. Arginine 249 lines the substrate pocket.

This sequence belongs to the MetA family.

Its subcellular location is the cytoplasm. The catalysed reaction is L-homoserine + acetyl-CoA = O-acetyl-L-homoserine + CoA. Its pathway is amino-acid biosynthesis; L-methionine biosynthesis via de novo pathway; O-acetyl-L-homoserine from L-homoserine: step 1/1. Transfers an acetyl group from acetyl-CoA to L-homoserine, forming acetyl-L-homoserine. This is Homoserine O-acetyltransferase from Geobacillus kaustophilus.